The primary structure comprises 393 residues: Envelope glycoprotein D (393 aa).

An N-terminal signal peptide occupies residues 1 to 25; sequence MGRLTSGVGTAALLVVAVGLRVVCA. Residues 25-57 are interaction with TNFRSF14; the sequence is AKYALADPSLKMADPNRFRGKNLPVLDRLTDPP. The Virion surface portion of the chain corresponds to 26 to 339; the sequence is KYALADPSLK…HHAPAAPSNP (314 aa). A Zn(2+)-binding site is contributed by His-64. 3 disulfides stabilise this stretch: Cys-91-Cys-214, Cys-131-Cys-227, and Cys-143-Cys-152. Residues Asn-119 and Asn-146 are each glycosylated (N-linked (GlcNAc...) asparagine; by host). Asp-240 contributes to the Zn(2+) binding site. The segment at 261–305 is profusion; that stretch reads LKIAGWHGPKPPYTSTLLPPELSDTTNATQPELVPEDPEDSALLE. A compositionally biased stretch (polar residues) spans 274 to 290; the sequence is TSTLLPPELSDTTNATQ. Positions 274–301 are disordered; sequence TSTLLPPELSDTTNATQPELVPEDPEDS. N-linked (GlcNAc...) asparagine; by host glycosylation is present at Asn-287. The chain crosses the membrane as a helical span at residues 340–363; the sequence is GLIIGALAGSTLAVLVIGGIAFWV. Over 364 to 393 the chain is Intravirion; that stretch reads RRRAQMAPKRLRLPHIRDDDAPPSHQPLFY.

Belongs to the herpesviridae glycoprotein D family. Homodimer. Interacts with host receptor TNFRSF14. Interacts with host receptor NECTIN1. Interacts with host receptor NECTIN2. Interacts (via profusion domain) with gB; this interaction occurs in the absence of gH/gL. Interacts (via profusion domain) with gH/gL heterodimer; this interaction occurs in the absence of gB. Associates with the gB-gH/gL-gD complex. Interacts (via C-terminus) with UL11 tegument protein.

The protein resides in the virion membrane. In terms of biological role, envelope glycoprotein that binds to the host cell entry receptors NECTIN1, NECTIN2 and TNFRSF14/HVEM, promoting the virus entry into host cells. May trigger fusion with host membrane, by recruiting the fusion machinery composed of gB and gH/gL. The polypeptide is Envelope glycoprotein D (gD) (Homo sapiens (Human)).